The sequence spans 378 residues: Squalene methyltransferase 1 (378 aa).

Residues 17–37 (LLTWKGVAGLVVAITLGYLII) traverse the membrane as a helical segment.

This sequence belongs to the class I-like SAM-binding methyltransferase superfamily. Erg6/SMT family.

Its subcellular location is the microsome membrane. It catalyses the reaction squalene + 2 S-adenosyl-L-methionine = 3,22-dimethyl-1,2,23,24-tetradehydro-2,3,22,23-tetrahydrosqualene + 2 S-adenosyl-L-homocysteine + 2 H(+). Functionally, converts squalene to mono- and dimethyl derivatives, but not to tri- and tetramethylated products. Unable to methylate cycloartenol, zymosterol or lanosterol. Methylates both C-3 and C22 positions, but only C-3 position in monomethylated products. Produces mainly dimethylated squalene. The protein is Squalene methyltransferase 1 (TMT-1) of Botryococcus braunii (Green alga).